The primary structure comprises 513 residues: MQLNSTEISELIKKRIAQFDVVSEARNTGTIVSVSDGIIRIHGLSEVMQGEMIALPTGRFAMALNLERDSVGAVVMGPYTDLAEGMEVQCTGRILEVPVGRGLLGRVVNTLGQPIDGKGEIKNDGFSPVEVIAPGVIDRKSVDQPVQTGYKAVDSMVPIGRGQRELIIGDRQTGKTALAIDAIINQRDSGVKCIYVAVGQKASTIANVVRKLEENGALANTIVVAASASESAALQYLAPYAGCAMGEYFRDRGEDALIVYDDLSKQAVAYRQISLLLRRPPGREAYPGDVFYLHSRLLERAARVNEEYVENFTKGEVKGKTGSLTALPIIETQAGDVSAFVPTNVISITDGQIFLESNLFNAGVRPAVNPGISVSRVGGAAQTKAVKKLAGGIRTALAQYRELAAFAQFASDLDDATRKQLSHGEKVTELLKQKQYAPLSVAEQAVILFAVEFGYLDDVELNKIADFETALLDYANRTNTEFMQELTKSGDYNDEIKNTLKGILDNFKANNTW.

Residue 169–176 (GDRQTGKT) coordinates ATP.

Belongs to the ATPase alpha/beta chains family. As to quaternary structure, F-type ATPases have 2 components, CF(1) - the catalytic core - and CF(0) - the membrane proton channel. CF(1) has five subunits: alpha(3), beta(3), gamma(1), delta(1), epsilon(1). CF(0) has three main subunits: a(1), b(2) and c(9-12). The alpha and beta chains form an alternating ring which encloses part of the gamma chain. CF(1) is attached to CF(0) by a central stalk formed by the gamma and epsilon chains, while a peripheral stalk is formed by the delta and b chains.

It is found in the cell inner membrane. The catalysed reaction is ATP + H2O + 4 H(+)(in) = ADP + phosphate + 5 H(+)(out). Functionally, produces ATP from ADP in the presence of a proton gradient across the membrane. The alpha chain is a regulatory subunit. This is ATP synthase subunit alpha from Mannheimia succiniciproducens (strain KCTC 0769BP / MBEL55E).